The primary structure comprises 429 residues: GTPase Obg (429 aa).

The 158-residue stretch at Met-1–Ile-158 folds into the Obg domain. An OBG-type G domain is found at Ala-159 to Lys-333. GTP-binding positions include Gly-165–Ser-172, Phe-190–Asn-194, Asp-212–Gly-215, Asn-282–Asp-285, and Ser-314–Val-316. The Mg(2+) site is built by Ser-172 and Thr-192. An OCT domain is found at Glu-350–Lys-429.

This sequence belongs to the TRAFAC class OBG-HflX-like GTPase superfamily. OBG GTPase family. Monomer. The cofactor is Mg(2+).

Its subcellular location is the cytoplasm. In terms of biological role, an essential GTPase which binds GTP, GDP and possibly (p)ppGpp with moderate affinity, with high nucleotide exchange rates and a fairly low GTP hydrolysis rate. Plays a role in control of the cell cycle, stress response, ribosome biogenesis and in those bacteria that undergo differentiation, in morphogenesis control. The sequence is that of GTPase Obg from Lachnoclostridium phytofermentans (strain ATCC 700394 / DSM 18823 / ISDg) (Clostridium phytofermentans).